A 359-amino-acid polypeptide reads, in one-letter code: Serpentine receptor class epsilon-33 (359 aa).

A run of 7 helical transmembrane segments spans residues 29-49 (VIIS…VNVS), 65-85 (ILAL…FITI), 134-156 (YMYS…SVLI), 168-188 (PAIL…GLLF), 194-214 (LSAH…YVFV), 255-275 (LVFA…ALHY), and 285-305 (LIEN…MLSI).

The protein belongs to the nematode receptor-like protein sre family.

It is found in the membrane. This is Serpentine receptor class epsilon-33 (sre-33) from Caenorhabditis elegans.